The following is a 1087-amino-acid chain: Exportin-7-B (1087 aa).

In terms of domain architecture, Importin N-terminal spans 30–96 (AEKALVEFTN…RNYVLTYLAT (67 aa)).

It belongs to the exportin family.

Its subcellular location is the cytoplasm. It is found in the nucleus. Mediates the nuclear export of proteins (cargos) with broad substrate specificity. In Xenopus laevis (African clawed frog), this protein is Exportin-7-B (xpo7-b).